The primary structure comprises 99 residues: Integration host factor subunit alpha (99 aa).

Belongs to the bacterial histone-like protein family. In terms of assembly, heterodimer of an alpha and a beta chain.

Its function is as follows. This protein is one of the two subunits of integration host factor, a specific DNA-binding protein that functions in genetic recombination as well as in transcriptional and translational control. This Pseudoalteromonas translucida (strain TAC 125) protein is Integration host factor subunit alpha.